The chain runs to 343 residues: tRNA N6-adenosine threonylcarbamoyltransferase (343 aa).

Histidine 114 and histidine 118 together coordinate Fe cation. Residues 137–141 (LVSGG), aspartate 171, glycine 184, aspartate 188, and asparagine 278 each bind substrate. Aspartate 306 is a binding site for Fe cation.

The protein belongs to the KAE1 / TsaD family. The cofactor is Fe(2+).

The protein localises to the cytoplasm. The enzyme catalyses L-threonylcarbamoyladenylate + adenosine(37) in tRNA = N(6)-L-threonylcarbamoyladenosine(37) in tRNA + AMP + H(+). Required for the formation of a threonylcarbamoyl group on adenosine at position 37 (t(6)A37) in tRNAs that read codons beginning with adenine. Is involved in the transfer of the threonylcarbamoyl moiety of threonylcarbamoyl-AMP (TC-AMP) to the N6 group of A37, together with TsaE and TsaB. TsaD likely plays a direct catalytic role in this reaction. This is tRNA N6-adenosine threonylcarbamoyltransferase from Acidothermus cellulolyticus (strain ATCC 43068 / DSM 8971 / 11B).